The following is a 346-amino-acid chain: Flap endonuclease 1 (346 aa).

The segment at 1–102 (MGVTELGKLI…AEIEERRKTR (102 aa)) is N-domain. Residues aspartate 31, aspartate 84, glutamate 156, glutamate 158, aspartate 177, aspartate 179, and aspartate 239 each coordinate Mg(2+). The interval 120 to 261 (DVAKYAKRAV…KALKLIWEFG (142 aa)) is I-domain.

This sequence belongs to the XPG/RAD2 endonuclease family. FEN1 subfamily. Interacts with PCNA. PCNA stimulates the nuclease activity without altering cleavage specificity. Requires Mg(2+) as cofactor.

Structure-specific nuclease with 5'-flap endonuclease and 5'-3' exonuclease activities involved in DNA replication and repair. During DNA replication, cleaves the 5'-overhanging flap structure that is generated by displacement synthesis when DNA polymerase encounters the 5'-end of a downstream Okazaki fragment. Binds the unpaired 3'-DNA end and kinks the DNA to facilitate 5' cleavage specificity. Cleaves one nucleotide into the double-stranded DNA from the junction in flap DNA, leaving a nick for ligation. Also involved in the base excision repair (BER) pathway. Acts as a genome stabilization factor that prevents flaps from equilibrating into structures that lead to duplications and deletions. Also possesses 5'-3' exonuclease activity on nicked or gapped double-stranded DNA. The protein is Flap endonuclease 1 of Pyrobaculum aerophilum (strain ATCC 51768 / DSM 7523 / JCM 9630 / CIP 104966 / NBRC 100827 / IM2).